A 263-amino-acid chain; its full sequence is 3-methyl-2-oxobutanoate hydroxymethyltransferase (263 aa).

Residues Asp-45 and Asp-84 each coordinate Mg(2+). 3-methyl-2-oxobutanoate is bound by residues 45–46 (DS), Asp-84, and Lys-112. Residue Glu-114 coordinates Mg(2+). Glu-181 serves as the catalytic Proton acceptor.

Belongs to the PanB family. Homodecamer; pentamer of dimers. Mg(2+) is required as a cofactor.

The protein localises to the cytoplasm. The catalysed reaction is 3-methyl-2-oxobutanoate + (6R)-5,10-methylene-5,6,7,8-tetrahydrofolate + H2O = 2-dehydropantoate + (6S)-5,6,7,8-tetrahydrofolate. It functions in the pathway cofactor biosynthesis; (R)-pantothenate biosynthesis; (R)-pantoate from 3-methyl-2-oxobutanoate: step 1/2. Its function is as follows. Catalyzes the reversible reaction in which hydroxymethyl group from 5,10-methylenetetrahydrofolate is transferred onto alpha-ketoisovalerate to form ketopantoate. This chain is 3-methyl-2-oxobutanoate hydroxymethyltransferase, found in Buchnera aphidicola subsp. Acyrthosiphon pisum (strain 5A).